We begin with the raw amino-acid sequence, 282 residues long: MEQIKTFILMTFLALIFMFFGGLIGGEQGVIIAFVVALGMNFFSYFFSDKLVLKHYHAVKVDENSAGGLYAIVRRLANAANVPMPSVYIIPEQIPNAFATGRNPNNAAVAVTEGLLNLLSENEIEGVLAHEMSHVRHYDILIGSVAAVFAGAIAILANFAKFGAVFGGNENNRQNGILMIVAAIIMPIAAAIIQMAISRSREYKADAGAANLTKHPEWLISALSKLENYAQNRTMQNATPQSAHMFIINPFSGVKSSFSQLFRTHPSTKDRIARLNEIKQSM.

Transmembrane regions (helical) follow at residues 6–26 (TFIL…LIGG) and 28–48 (QGVI…YFFS). Zn(2+) is bound at residue His-130. Glu-131 is a catalytic residue. His-134 lines the Zn(2+) pocket. 2 consecutive transmembrane segments (helical) span residues 140 to 160 (ILIG…ANFA) and 177 to 197 (ILMI…QMAI). Glu-202 serves as a coordination point for Zn(2+).

Belongs to the peptidase M48B family. Requires Zn(2+) as cofactor.

The protein localises to the cell inner membrane. The sequence is that of Protease HtpX homolog from Campylobacter hominis (strain ATCC BAA-381 / DSM 21671 / CCUG 45161 / LMG 19568 / NCTC 13146 / CH001A).